Reading from the N-terminus, the 184-residue chain is Ribosome-recycling factor (184 aa).

The protein belongs to the RRF family.

It is found in the cytoplasm. Responsible for the release of ribosomes from messenger RNA at the termination of protein biosynthesis. May increase the efficiency of translation by recycling ribosomes from one round of translation to another. The polypeptide is Ribosome-recycling factor (Leptospira borgpetersenii serovar Hardjo-bovis (strain JB197)).